The following is a 196-amino-acid chain: Sesquiterpene phosphatase astK (196 aa).

This sequence belongs to the HAD-like hydrolase superfamily.

The catalysed reaction is (S,S)-drim-8-en-11-yl phosphate + H2O = (S,S)-drim-8-en-11-ol + phosphate. The protein operates within secondary metabolite biosynthesis; terpenoid biosynthesis. Sesquiterpene phosphatase; part of the gene cluster that mediates the biosynthesis of astellolides, drimane-type sesquiterpene esters that show antimicrobial, anti-inflammatory, and anti-tumor activities. The first step in astellolide biosynthesis is performed by the sesquiterpene cyclase astC that catalyzes the formation of drimanyl pyrophosphate from farnesyl pyrophosphate. Drimanyl pyrophosphate is then dephosphorylated by the sesquiterpene phosphatase astI to produce drimanyl monophosphate which is further dephosphorylated to drim-8-ene-11-ol by atsK. Drim-8-ene-11-ol is converted to confertifolin, probably by the cytochrome P450 monooxygenase astD and/or the dehydrogenase astE. The cytochrome P450 monooxygenases astB, astF and astJ then hydroxylate confertifolin at C6, C14, or C15 to form trihydroxy confertifolin. The nonribosomal peptide synthetase astA catalyzes ester bond formation between trihydroxy contifolin and benzoic acid (BA) or 4-hydroxy benzoic acid (4HBA), leading to the formation of dideacetyl astellolides A and B, respectively. Finally, the O-acetyltransferase astG converts dideacetyl astellolides A and B into deacetyl astellolides A and B. This chain is Sesquiterpene phosphatase astK, found in Aspergillus oryzae (strain ATCC 42149 / RIB 40) (Yellow koji mold).